The chain runs to 174 residues: Mytilin-3 (174 aa).

The N-terminal stretch at 1-16 (MLKGIILIVTIQLVNA) is a signal peptide.

Component of the organic matrix of calcified shell layers like nacre and prisms.

The protein localises to the secreted. The protein is Mytilin-3 of Mytilus californianus (California mussel).